The sequence spans 475 residues: Putative F-box protein At1g46840 (475 aa).

The region spanning 25–71 (TYVLEKLHIDLVIEILSRLSAKSIAICRCVSKQWNSLLVSQDFVESF) is the F-box domain. The span at 423-433 (SSYSTTRSYKS) shows a compositional bias: low complexity. Residues 423–475 (SSYSTTRSYKSSGKRCSDRSIGEDEQDDIGEKRGDQAAERRERSTKRGKHEVH) are disordered. A compositionally biased stretch (basic and acidic residues) spans 451 to 464 (IGEKRGDQAAERRE). Positions 465–475 (RSTKRGKHEVH) are enriched in basic residues.

The chain is Putative F-box protein At1g46840 from Arabidopsis thaliana (Mouse-ear cress).